The sequence spans 201 residues: Small ribosomal subunit protein uS4c (201 aa).

Residues 20 to 43 are disordered; the sequence is GLTSKRPRAGSDLRNQSRSGKRSQ. One can recognise an S4 RNA-binding domain in the interval 89 to 149; it reads MRLDNILFRL…DEQKSRALIQ (61 aa).

It belongs to the universal ribosomal protein uS4 family. As to quaternary structure, part of the 30S ribosomal subunit. Contacts protein S5. The interaction surface between S4 and S5 is involved in control of translational fidelity.

The protein localises to the plastid. It is found in the chloroplast. In terms of biological role, one of the primary rRNA binding proteins, it binds directly to 16S rRNA where it nucleates assembly of the body of the 30S subunit. With S5 and S12 plays an important role in translational accuracy. The protein is Small ribosomal subunit protein uS4c (rps4) of Buxus microphylla (Littleleaf boxwood).